The sequence spans 199 residues: Recombination protein RecR (199 aa).

A C4-type zinc finger spans residues 57 to 72; sequence CQSCRTFTEETYCPIC. The Toprim domain occupies 81 to 176; it reads SVICVVETPA…AVSRIAHGVP (96 aa).

The protein belongs to the RecR family.

Its function is as follows. May play a role in DNA repair. It seems to be involved in an RecBC-independent recombinational process of DNA repair. It may act with RecF and RecO. The sequence is that of Recombination protein RecR from Shewanella piezotolerans (strain WP3 / JCM 13877).